Here is a 436-residue protein sequence, read N- to C-terminus: Trigger factor (436 aa).

Residues 161–246 (GMRVTMDFVG…LNKVEEQILP (86 aa)) enclose the PPIase FKBP-type domain.

This sequence belongs to the FKBP-type PPIase family. Tig subfamily.

It localises to the cytoplasm. It carries out the reaction [protein]-peptidylproline (omega=180) = [protein]-peptidylproline (omega=0). Involved in protein export. Acts as a chaperone by maintaining the newly synthesized protein in an open conformation. Functions as a peptidyl-prolyl cis-trans isomerase. This Aeromonas hydrophila subsp. hydrophila (strain ATCC 7966 / DSM 30187 / BCRC 13018 / CCUG 14551 / JCM 1027 / KCTC 2358 / NCIMB 9240 / NCTC 8049) protein is Trigger factor.